Reading from the N-terminus, the 618-residue chain is 1-deoxy-D-xylulose-5-phosphate synthase (618 aa).

Residues His73 and 114–116 (GHS) contribute to the thiamine diphosphate site. Asp145 is a binding site for Mg(2+). Thiamine diphosphate contacts are provided by residues 146–147 (GA), Asn174, Tyr284, and Glu364. Asn174 provides a ligand contact to Mg(2+).

This sequence belongs to the transketolase family. DXPS subfamily. In terms of assembly, homodimer. Mg(2+) is required as a cofactor. The cofactor is thiamine diphosphate.

It catalyses the reaction D-glyceraldehyde 3-phosphate + pyruvate + H(+) = 1-deoxy-D-xylulose 5-phosphate + CO2. It participates in metabolic intermediate biosynthesis; 1-deoxy-D-xylulose 5-phosphate biosynthesis; 1-deoxy-D-xylulose 5-phosphate from D-glyceraldehyde 3-phosphate and pyruvate: step 1/1. In terms of biological role, catalyzes the acyloin condensation reaction between C atoms 2 and 3 of pyruvate and glyceraldehyde 3-phosphate to yield 1-deoxy-D-xylulose-5-phosphate (DXP). The chain is 1-deoxy-D-xylulose-5-phosphate synthase from Clostridium beijerinckii (strain ATCC 51743 / NCIMB 8052) (Clostridium acetobutylicum).